The primary structure comprises 160 residues: Small RNA binding protein 1 (160 aa).

Residues 8–86 form the RRM domain; sequence FRCFVGGLAW…RNITVNEAQQ (79 aa). A disordered region spans residues 82-160; that stretch reads NEAQQRGGGG…GGGSEGGWRN (79 aa). Gly residues predominate over residues 87-160; sequence RGGGGGGGYN…GGGSEGGWRN (74 aa). The segment at 88 to 157 is glycine-rich (GR) required for cell-to-cell movement; that stretch reads GGGGGGGYNR…GSGGGGSEGG (70 aa).

Belongs to the GR-RBP family. Binds to small phloem-mobile single-stranded RNAs (ss-sRNA, e.g. small interfering RNA (siRNA) and microRNA (miRNA)) in the phloeme exudate, including viral-derived sRNA (vsiRNA). In terms of tissue distribution, accumulates in phloem exudates.

Its subcellular location is the secreted. Possibly has a role in RNA transcription or processing during stress. Binds sequence non-specifically to RNAs and DNAs. Mediates cell-to-cell trafficking of RNA interference (RNAi) signals (small RNAs (sRNA), e.g. small interfering RNA (siRNA) and microRNA (miRNA)) which regulate growth and development, as well as responses to environmental inputs, including pathogen attack; can compromise zucchini yellow mosaic virus (ZYMV) and tobacco rattle virus (TRV) infections at the early stage. This Cucumis sativus (Cucumber) protein is Small RNA binding protein 1.